We begin with the raw amino-acid sequence, 632 residues long: DNA mismatch repair protein MutL (632 aa).

The disordered stretch occupies residues 376–397 (EQPQAEPRQSFTPGSGAGSGYQ).

This sequence belongs to the DNA mismatch repair MutL/HexB family.

In terms of biological role, this protein is involved in the repair of mismatches in DNA. It is required for dam-dependent methyl-directed DNA mismatch repair. May act as a 'molecular matchmaker', a protein that promotes the formation of a stable complex between two or more DNA-binding proteins in an ATP-dependent manner without itself being part of a final effector complex. This is DNA mismatch repair protein MutL from Pseudomonas entomophila (strain L48).